The sequence spans 199 residues: Translation initiation factor IF-3 (199 aa).

Belongs to the IF-3 family. As to quaternary structure, monomer.

The protein resides in the cytoplasm. IF-3 binds to the 30S ribosomal subunit and shifts the equilibrium between 70S ribosomes and their 50S and 30S subunits in favor of the free subunits, thus enhancing the availability of 30S subunits on which protein synthesis initiation begins. The sequence is that of Translation initiation factor IF-3 from Gloeobacter violaceus (strain ATCC 29082 / PCC 7421).